We begin with the raw amino-acid sequence, 102 residues long: Membrane-bound protein LytA (102 aa).

A signal peptide spans 1-16 (MKKFIALLFFILLLSG). Cysteine 17 carries N-palmitoyl cysteine lipidation. Cysteine 17 is lipidated: S-diacylglycerol cysteine.

The protein localises to the cell membrane. Functionally, possible role in the secretion of LytB and LytC. This Bacillus subtilis (strain 168) protein is Membrane-bound protein LytA (lytA).